Consider the following 455-residue polypeptide: Chromosomal replication initiator protein DnaA 2 (455 aa).

The domain I, interacts with DnaA modulators stretch occupies residues methionine 1–serine 95. A domain II region spans residues isoleucine 96–leucine 112. The domain III, AAA+ region stretch occupies residues lysine 113 to cysteine 328. The ATP site is built by glycine 157, glycine 159, lysine 160, and threonine 161. Positions leucine 329 to valine 455 are domain IV, binds dsDNA.

This sequence belongs to the DnaA family. In terms of assembly, oligomerizes as a right-handed, spiral filament on DNA at oriC.

It is found in the cytoplasm. Plays an essential role in the initiation and regulation of chromosomal replication. ATP-DnaA binds to the origin of replication (oriC) to initiate formation of the DNA replication initiation complex once per cell cycle. Binds the DnaA box (a 9 base pair repeat at the origin) and separates the double-stranded (ds)DNA. Forms a right-handed helical filament on oriC DNA; dsDNA binds to the exterior of the filament while single-stranded (ss)DNA is stabiized in the filament's interior. The ATP-DnaA-oriC complex binds and stabilizes one strand of the AT-rich DNA unwinding element (DUE), permitting loading of DNA polymerase. After initiation quickly degrades to an ADP-DnaA complex that is not apt for DNA replication. Binds acidic phospholipids. The protein is Chromosomal replication initiator protein DnaA 2 of Chlamydia trachomatis serovar D (strain ATCC VR-885 / DSM 19411 / UW-3/Cx).